Reading from the N-terminus, the 221-residue chain is Deep sea actinoporin Cjtox II (221 aa).

The N-terminal stretch at 1-19 (MNRLIIVCLVAAMIYSTIA) is a signal peptide. The propeptide occupies 20-42 (LPMKEDISNDERPISVNEEPVKK). Phosphocholine contacts are provided by serine 96, valine 129, serine 147, proline 149, tyrosine 175, tyrosine 179, and tyrosine 180. Residues 147-162 (SVPYDYNWYENWWNIK) are trp-rich region, which is important for the binding to lipid membrane. The Cell attachment site, crucial for protein stability motif lies at 186 to 188 (KGD).

This sequence belongs to the actinoporin family. Sea anemone subfamily. As to quaternary structure, octamer or nonamer in membranes. Monomer in the soluble state. In terms of tissue distribution, expressed in actinopharynx and in gastric filaments. Is not expressed in tentacles.

The protein localises to the secreted. It localises to the nematocyst. It is found in the target cell membrane. Functionally, may be involved in digestion of prey. Pore-forming protein that forms cations-selective hydrophilic pores of around 1 nm and causes cytolysis. Pore formation is a multi-step process that involves specific recognition of membrane sphingomyelin (but neither cholesterol nor phosphatidylcholine) using aromatic rich region and adjacent phosphocholine (POC) binding site, firm binding to the membrane (mainly driven by hydrophobic interactions) accompanied by the transfer of the N-terminal region to the lipid-water interface and finally pore formation after oligomerization of monomers. Shows hemolytic activity on equine erythrocytes. Hemolysis is highly inhibited in presence of sphingomyelin, suggesting that this protein targets sphingomyelin. The polypeptide is Deep sea actinoporin Cjtox II (Cribrinopsis japonica (Deep-sea anemone)).